Reading from the N-terminus, the 545-residue chain is ATP synthase subunit alpha (545 aa).

Residue 173–180 (GDRQTGKS) coordinates ATP.

Belongs to the ATPase alpha/beta chains family. In terms of assembly, F-type ATPases have 2 components, CF(1) - the catalytic core - and CF(0) - the membrane proton channel. CF(1) has five subunits: alpha(3), beta(3), gamma(1), delta(1), epsilon(1). CF(0) has three main subunits: a(1), b(2) and c(9-12). The alpha and beta chains form an alternating ring which encloses part of the gamma chain. CF(1) is attached to CF(0) by a central stalk formed by the gamma and epsilon chains, while a peripheral stalk is formed by the delta and b chains.

The protein resides in the cell membrane. It carries out the reaction ATP + H2O + 4 H(+)(in) = ADP + phosphate + 5 H(+)(out). Functionally, produces ATP from ADP in the presence of a proton gradient across the membrane. The alpha chain is a regulatory subunit. This Pseudarthrobacter chlorophenolicus (strain ATCC 700700 / DSM 12829 / CIP 107037 / JCM 12360 / KCTC 9906 / NCIMB 13794 / A6) (Arthrobacter chlorophenolicus) protein is ATP synthase subunit alpha.